A 76-amino-acid chain; its full sequence is Sea anemone sodium channel inhibitor type I (76 aa).

Residues Met-1–Gly-19 form the signal peptide. A propeptide spanning residues Leu-20–Ala-30 is cleaved from the precursor. Intrachain disulfides connect Cys-37–Cys-72, Cys-39–Cys-60, and Cys-53–Cys-73.

Belongs to the sea anemone sodium channel inhibitory toxin family. Type I subfamily. Expressed in acontia, a specialised envenomation structure laden with batteries of venom-containing nematocysts found only in the superfamily Metridioidea.

It localises to the secreted. The protein resides in the nematocyst. Its function is as follows. May affect sodium channels (Nav). The protein is Sea anemone sodium channel inhibitor type I of Calliactis polypus (Hermit crab anemone).